The chain runs to 175 residues: Small ribosomal subunit protein uS5 (175 aa).

The 64-residue stretch at 19 to 82 (WQERVIQIRR…ADGKKHLIDI (64 aa)) folds into the S5 DRBM domain.

The protein belongs to the universal ribosomal protein uS5 family. As to quaternary structure, part of the 30S ribosomal subunit. Contacts proteins S4 and S8.

In terms of biological role, with S4 and S12 plays an important role in translational accuracy. Its function is as follows. Located at the back of the 30S subunit body where it stabilizes the conformation of the head with respect to the body. The sequence is that of Small ribosomal subunit protein uS5 from Nostoc punctiforme (strain ATCC 29133 / PCC 73102).